A 189-amino-acid polypeptide reads, in one-letter code: Ribosome maturation factor RimP (189 aa).

The protein belongs to the RimP family.

The protein resides in the cytoplasm. Functionally, required for maturation of 30S ribosomal subunits. In Mycobacteroides abscessus (strain ATCC 19977 / DSM 44196 / CCUG 20993 / CIP 104536 / JCM 13569 / NCTC 13031 / TMC 1543 / L948) (Mycobacterium abscessus), this protein is Ribosome maturation factor RimP.